Here is a 225-residue protein sequence, read N- to C-terminus: Endonuclease V (225 aa).

Positions 43 and 110 each coordinate Mg(2+).

It belongs to the endonuclease V family. Mg(2+) is required as a cofactor.

The protein localises to the cytoplasm. It catalyses the reaction Endonucleolytic cleavage at apurinic or apyrimidinic sites to products with a 5'-phosphate.. DNA repair enzyme involved in the repair of deaminated bases. Selectively cleaves double-stranded DNA at the second phosphodiester bond 3' to a deoxyinosine leaving behind the intact lesion on the nicked DNA. The protein is Endonuclease V of Thermotoga petrophila (strain ATCC BAA-488 / DSM 13995 / JCM 10881 / RKU-1).